Reading from the N-terminus, the 160-residue chain is Ribosome maturation factor RimP (160 aa).

Belongs to the RimP family.

It is found in the cytoplasm. Required for maturation of 30S ribosomal subunits. The sequence is that of Ribosome maturation factor RimP from Orientia tsutsugamushi (strain Boryong) (Rickettsia tsutsugamushi).